Here is a 413-residue protein sequence, read N- to C-terminus: MNAVEEIGKRAKLVTSDVANLAVDIRNQILLDMSSALVANWQEIVAANKKDLDAATQLSGPMRNRLTLDQKTIGGIAASLSAVAKLADPLAGPYDNWKNHTGFKIVKKTVPLGVVAMIFEARPNVTVDAAALTFKSGNAVILRGGKEAIESNIILTNILRNVLRKHNLNPDIIQLITDTTHDSVNTLLNLRDYVDVLIPRGSGQFIDFVVKNATVPVIETGAGNTHIFVDESAKQDEAIRVIHNAKTQKPAVCNAAEKLLIHEAIAGEFLPKIVDDLLAAGVELRGDQKARSIDSRVIGASAEDWDTEYNDLIMAIKIVHNNDEAITWINDHTTHHSETIISEDLNHVTDFMNTVDAAVVYQNVSSRFTDGFEFGFGAEIGISTQKLHARGPMGLSALTTIKYEVFGEGQIRE.

The protein belongs to the gamma-glutamyl phosphate reductase family.

The protein resides in the cytoplasm. The enzyme catalyses L-glutamate 5-semialdehyde + phosphate + NADP(+) = L-glutamyl 5-phosphate + NADPH + H(+). The protein operates within amino-acid biosynthesis; L-proline biosynthesis; L-glutamate 5-semialdehyde from L-glutamate: step 2/2. Catalyzes the NADPH-dependent reduction of L-glutamate 5-phosphate into L-glutamate 5-semialdehyde and phosphate. The product spontaneously undergoes cyclization to form 1-pyrroline-5-carboxylate. The chain is Gamma-glutamyl phosphate reductase from Leuconostoc mesenteroides subsp. mesenteroides (strain ATCC 8293 / DSM 20343 / BCRC 11652 / CCM 1803 / JCM 6124 / NCDO 523 / NBRC 100496 / NCIMB 8023 / NCTC 12954 / NRRL B-1118 / 37Y).